Reading from the N-terminus, the 170-residue chain is Adenine phosphoribosyltransferase (170 aa).

It belongs to the purine/pyrimidine phosphoribosyltransferase family. In terms of assembly, homodimer.

The protein localises to the cytoplasm. The catalysed reaction is AMP + diphosphate = 5-phospho-alpha-D-ribose 1-diphosphate + adenine. It functions in the pathway purine metabolism; AMP biosynthesis via salvage pathway; AMP from adenine: step 1/1. Functionally, catalyzes a salvage reaction resulting in the formation of AMP, that is energically less costly than de novo synthesis. This chain is Adenine phosphoribosyltransferase, found in Lactococcus lactis subsp. lactis (strain IL1403) (Streptococcus lactis).